Here is a 234-residue protein sequence, read N- to C-terminus: Dienlactone hydrolase 2 (234 aa).

Active-site residues include C143, D167, and H199.

This sequence belongs to the dienelactone hydrolase family.

Its pathway is xenobiotic degradation. Dienlactone hydrolase; part of the Fusarium detoxification of benzoxazolinone cluster 2 (FDB2) involved in the degradation of benzoxazolinones produced by the host plant. Maize, wheat, and rye produce the 2 benzoxazinone phytoanticipins 2,4-dihy-droxy-7-methoxy-1,4-benzoxazin-3-one (DIMBOA) and 2,4-dihydroxy-1,4-benzoxazin-3-one (DIBOA) that, due to their inherent instability once released, spontaneously degrade to the more stable corresponding benzoxazolinones, 6-methoxy-2-benzoxazolinone (MBOA) and 2-benzoxazolinone (BOA), respectively. The first step in the detoxification of benzoxazolinones involves the hydrolysis of the cyclic ester bond of benzoxazolinones by the FDB1 cluster gamma-lactamase MBL1 to aminophenols. MBL1 is able to convert BOA into 2-aminophenol (2-AP), as well as MBOA into 5-methoxy-2-aminophenol (2-AMP). The FDB2 cluster N-malonyltransferase FDB2/NAT1 then metabolizes aminophenols via N-malonylation to non-toxic malonamic acids. FDB2/NAT1 converts 2-AP into N-(2-hydroxyphenyl) malonamic acid (HPMA) and 2-AMP into N-(2-hydroxy-4-methoxyphenyl) malonamic acid (HMPMA). The duplicated dienlactone hydrolases DLH1 and DLH2 may provide redundant function for hydrolyzing the lactone moiety in the BOA molecule. The roles of the amidases and other enzymes encoded by the 2 FDB clusters have not been identified so far. The chain is Dienlactone hydrolase 2 from Gibberella moniliformis (strain M3125 / FGSC 7600) (Maize ear and stalk rot fungus).